We begin with the raw amino-acid sequence, 331 residues long: L-lactate dehydrogenase A chain (331 aa).

NAD(+)-binding positions include 29 to 57 and Arg-98; that span reads GMVGMASAISILLKDLCDELAMVDVMEDK. Positions 105, 137, and 168 each coordinate substrate. Asn-137 serves as a coordination point for NAD(+). His-192 functions as the Proton acceptor in the catalytic mechanism. Thr-247 is a substrate binding site.

This sequence belongs to the LDH/MDH superfamily. LDH family. As to quaternary structure, homotetramer.

It is found in the cytoplasm. The enzyme catalyses (S)-lactate + NAD(+) = pyruvate + NADH + H(+). Its pathway is fermentation; pyruvate fermentation to lactate; (S)-lactate from pyruvate: step 1/1. Its function is as follows. Interconverts simultaneously and stereospecifically pyruvate and lactate with concomitant interconversion of NADH and NAD(+). The protein is L-lactate dehydrogenase A chain (ldha) of Gobionotothen gibberifrons (Humped rockcod).